The sequence spans 645 residues: Threonine--tRNA ligase (645 aa).

Positions 1-63 (MEQINIQFPD…ETDGSIEIVT (63 aa)) constitute a TGS domain. The segment at 242–540 (DHRKIGKELE…LTEETKGAFP (299 aa)) is catalytic. The Zn(2+) site is built by Cys-336, His-387, and His-517.

The protein belongs to the class-II aminoacyl-tRNA synthetase family. As to quaternary structure, homodimer. The cofactor is Zn(2+).

It is found in the cytoplasm. It catalyses the reaction tRNA(Thr) + L-threonine + ATP = L-threonyl-tRNA(Thr) + AMP + diphosphate + H(+). Catalyzes the attachment of threonine to tRNA(Thr) in a two-step reaction: L-threonine is first activated by ATP to form Thr-AMP and then transferred to the acceptor end of tRNA(Thr). Also edits incorrectly charged L-seryl-tRNA(Thr). This is Threonine--tRNA ligase from Staphylococcus aureus (strain NCTC 8325 / PS 47).